The primary structure comprises 184 residues: ATP synthase subunit b, chloroplastic (184 aa).

Residues 31-53 (LINLAVVIGVLVYFGKGVLTTIL) form a helical membrane-spanning segment.

It belongs to the ATPase B chain family. As to quaternary structure, F-type ATPases have 2 components, F(1) - the catalytic core - and F(0) - the membrane proton channel. F(1) has five subunits: alpha(3), beta(3), gamma(1), delta(1), epsilon(1). F(0) has four main subunits: a(1), b(1), b'(1) and c(10-14). The alpha and beta chains form an alternating ring which encloses part of the gamma chain. F(1) is attached to F(0) by a central stalk formed by the gamma and epsilon chains, while a peripheral stalk is formed by the delta, b and b' chains.

The protein resides in the plastid. It is found in the chloroplast thylakoid membrane. In terms of biological role, f(1)F(0) ATP synthase produces ATP from ADP in the presence of a proton or sodium gradient. F-type ATPases consist of two structural domains, F(1) containing the extramembraneous catalytic core and F(0) containing the membrane proton channel, linked together by a central stalk and a peripheral stalk. During catalysis, ATP synthesis in the catalytic domain of F(1) is coupled via a rotary mechanism of the central stalk subunits to proton translocation. Its function is as follows. Component of the F(0) channel, it forms part of the peripheral stalk, linking F(1) to F(0). The protein is ATP synthase subunit b, chloroplastic of Staurastrum punctulatum (Green alga).